A 797-amino-acid chain; its full sequence is MASCRAWNLRVLVAVVCGLLTGIILGLGIWRIVIRIQRGKSTSSSSTPTEFCRNGGTWENGRCICTEEWKGLRCTIANFCENSTYMGFTFARIPVGRYGPSLQTCGKDTPNAGNPMAVRLCSLSLYGEIELQKVTIGNCNENLETLEKQVKDVTAPLNNISSEVQILTSDANKLTAENITSATRVVGQIFNTSRNASPEAKKVAIVTVSQLLDASEDAFQRVAATANDDALTTLIEQMETYSLSLGNQSVVEPNIAIQSANFSSENAVGPSNVRFSVQKGASSSLVSSSTFIHTNVDGLNPDAQTELQVLLNMTKNYTKTCGFVVYQNDKLFQSKTFTAKSDFSQKIISSKTDENEQDQSASVDMVFSPKYNQKEFQLYSYACVYWNLSAKDWDTYGCQKDKGTDGFLRCRCNHTTNFAVLMTFKKDYQYPKSLDILSNVGCALSVTGLALTVIFQIVTRKVRKTSVTWVLVNLCISMLIFNLLFVFGIENSNKNLQTSDGDINNIDFDNNDIPRTDTINIPNPMCTAIAALLHYFLLVTFTWNALSAAQLYYLLIRTMKPLPRHFILFISLIGWGVPAIVVAITVGVIYSQNGNNPQWELDYRQEKICWLAIPEPNGVIKSPLLWSFIVPVTIILISNVVMFITISIKVLWKNNQNLTSTKKVSSMKKIVSTLSVAVVFGITWILAYLMLVNDDSIRIVFSYIFCLFNTTQGLQIFILYTVRTKVFQSEASKVLMLLSSIGRRKSLPSVTRPRLRVKMYNFLRSLPTLHERFRLLETSPSTEEITLSESDNAKESI.

The N-terminal stretch at 1 to 26 (MASCRAWNLRVLVAVVCGLLTGIILG) is a signal peptide. The Extracellular portion of the chain corresponds to 27 to 438 (LGIWRIVIRI…QYPKSLDILS (412 aa)). N-linked (GlcNAc...) asparagine glycosylation is found at asparagine 82, asparagine 159, asparagine 178, asparagine 191, asparagine 247, asparagine 261, asparagine 312, asparagine 316, and asparagine 387. A GAIN-B domain is found at 275–428 (FSVQKGASSS…AVLMTFKKDY (154 aa)). Intrachain disulfides connect cysteine 383–cysteine 410 and cysteine 398–cysteine 412. Residues 383–428 (CVYWNLSAKDWDTYGCQKDKGTDGFLRCRCNHTTNFAVLMTFKKDY) form a GPS region. An N-linked (GlcNAc...) asparagine glycan is attached at asparagine 413. The chain crosses the membrane as a helical span at residues 439–459 (NVGCALSVTGLALTVIFQIVT). Topologically, residues 460–468 (RKVRKTSVT) are cytoplasmic. Residues 469–489 (WVLVNLCISMLIFNLLFVFGI) form a helical membrane-spanning segment. The Extracellular portion of the chain corresponds to 490-528 (ENSNKNLQTSDGDINNIDFDNNDIPRTDTINIPNPMCTA). The helical transmembrane segment at 529-549 (IAALLHYFLLVTFTWNALSAA) threads the bilayer. Residues 550–565 (QLYYLLIRTMKPLPRH) lie on the Cytoplasmic side of the membrane. Residues 566-586 (FILFISLIGWGVPAIVVAITV) traverse the membrane as a helical segment. Residues 587–623 (GVIYSQNGNNPQWELDYRQEKICWLAIPEPNGVIKSP) are Extracellular-facing. A helical transmembrane segment spans residues 624-644 (LLWSFIVPVTIILISNVVMFI). At 645 to 669 (TISIKVLWKNNQNLTSTKKVSSMKK) the chain is on the cytoplasmic side. Residues 670 to 690 (IVSTLSVAVVFGITWILAYLM) form a helical membrane-spanning segment. Residues 691–698 (LVNDDSIR) lie on the Extracellular side of the membrane. The helical transmembrane segment at 699–719 (IVFSYIFCLFNTTQGLQIFIL) threads the bilayer. The Cytoplasmic segment spans residues 720–797 (YTVRTKVFQS…SESDNAKESI (78 aa)).

It belongs to the G-protein coupled receptor 2 family. Adhesion G-protein coupled receptor (ADGR) subfamily.

It is found in the membrane. In terms of biological role, orphan receptor. In Homo sapiens (Human), this protein is Adhesion G-protein coupled receptor G7 (ADGRG7).